The chain runs to 291 residues: S-adenosylmethionine uptake transporter (291 aa).

10 helical membrane passes run alanine 4 to alanine 24, valine 41 to glycine 61, isoleucine 74 to leucine 91, threonine 98 to leucine 118, asparagine 121 to leucine 141, phenylalanine 148 to isoleucine 168, methionine 178 to alanine 198, leucine 206 to leucine 226, alanine 237 to phenylalanine 257, and phenylalanine 260 to isoleucine 280. 2 consecutive EamA domains span residues serine 21–leucine 141 and isoleucine 160–isoleucine 280.

The protein belongs to the drug/metabolite transporter (DMT) superfamily. 10 TMS drug/metabolite exporter (DME) (TC 2.A.7.3) family.

It localises to the cell inner membrane. Its function is as follows. Transports S-adenosylmethionine. This Rickettsia bellii (strain RML369-C) protein is S-adenosylmethionine uptake transporter (sam).